The following is a 505-amino-acid chain: Deoxyguanosinetriphosphate triphosphohydrolase (505 aa).

Residues 66 to 273 (RLTHSMEVQQ…MEAADDISYC (208 aa)) form the HD domain.

This sequence belongs to the dGTPase family. Type 1 subfamily. In terms of assembly, homotetramer. It depends on Mg(2+) as a cofactor.

The enzyme catalyses dGTP + H2O = 2'-deoxyguanosine + triphosphate + H(+). Its function is as follows. dGTPase preferentially hydrolyzes dGTP over the other canonical NTPs. This chain is Deoxyguanosinetriphosphate triphosphohydrolase, found in Salmonella choleraesuis (strain SC-B67).